The following is a 364-amino-acid chain: Chorismate synthase (364 aa).

Arg-47 provides a ligand contact to NADP(+). FMN contacts are provided by residues 125-127, Gly-285, 300-304, and Arg-327; these read RFS and KPTPS.

The protein belongs to the chorismate synthase family. In terms of assembly, homotetramer. It depends on FMNH2 as a cofactor.

The enzyme catalyses 5-O-(1-carboxyvinyl)-3-phosphoshikimate = chorismate + phosphate. It participates in metabolic intermediate biosynthesis; chorismate biosynthesis; chorismate from D-erythrose 4-phosphate and phosphoenolpyruvate: step 7/7. Its function is as follows. Catalyzes the anti-1,4-elimination of the C-3 phosphate and the C-6 proR hydrogen from 5-enolpyruvylshikimate-3-phosphate (EPSP) to yield chorismate, which is the branch point compound that serves as the starting substrate for the three terminal pathways of aromatic amino acid biosynthesis. This reaction introduces a second double bond into the aromatic ring system. The chain is Chorismate synthase from Dehalococcoides mccartyi (strain ATCC BAA-2266 / KCTC 15142 / 195) (Dehalococcoides ethenogenes (strain 195)).